We begin with the raw amino-acid sequence, 215 residues long: Inositol diphosphatase DSP1 (215 aa).

A Tyrosine-protein phosphatase domain is found at 58–209 (NFSMVDNGIF…VSSFSHIPMS (152 aa)). A WPD loop important for active site topology region spans residues 114-126 (FGIEGNKEPFVNI). Residues Asn125, Ile126, His129, and Lys130 each coordinate 1D-myo-inositol hexakisphosphate. Cys150 (phosphocysteine intermediate) is an active-site residue.

The protein belongs to the protein-tyrosine phosphatase family. Atypical dual-specificity phosphatase Siw14-like subfamily. Homodimer and homohexamer; behaves as a monomer in solution. In terms of tissue distribution, highly expressed in siliques and at lower levels in roots, leaves and flowers.

The catalysed reaction is 5-diphospho-1D-myo-inositol 1,2,3,4,6-pentakisphosphate + H2O = 1D-myo-inositol hexakisphosphate + phosphate + H(+). It catalyses the reaction 1,5-bis(diphospho)-1D-myo-inositol 2,3,4,6-tetrakisphosphate + H2O = 1-diphospho-1D-myo-inositol 2,3,4,5,6-pentakisphosphate + phosphate + 2 H(+). It carries out the reaction 3,5-bis(diphospho)-1D-myo-inositol 1,2,4,6-tetrakisphosphate + H2O = 3-diphospho-1D-myo-inositol 1,2,4,5,6-pentakisphosphate + phosphate + 2 H(+). The enzyme catalyses 6-diphospho-1D-myo-inositol pentakisphosphate + H2O = 1D-myo-inositol hexakisphosphate + phosphate + H(+). The catalysed reaction is 5-diphospho-1D-myo-inositol 1,3,4,6-tetrakisphosphate + H2O = 1D-myo-inositol 1,3,4,5,6-pentakisphosphate + phosphate + H(+). Its activity is regulated as follows. Inhibited by manganese, calcium and zinc ions but not magnesium ions. In terms of biological role, cleaves the beta-phosphate at the 5-position of soluble inositol pyrophosphates. Has highest activity on 5-diphosphoinositol 1,2,3,4,6-pentakisphosphate (5-InsP(7)), 1,5-bis-diphosphoinositol 2,3,4,6-tetrakisphosphate (1,5-InsP(8)) and 3,5-InsP(8), but has weak activity against 1-diphosphoinositol 2,3,4,5,6-pentakisphosphate (1-InsP(7)). Dephosphorylates the phosphoinositides PI(3,4,5)P3, PI(3,5)P2, but not PI(3)P, PI(3,4)P2 or PI(4,5)P2. Possesses phosphotyrosine phosphatase activity in vitro, and can hydrolyze para-nitrophenyl phosphate, O-methylfluorescein phosphate, polyphosphate and ATP. This chain is Inositol diphosphatase DSP1, found in Arabidopsis thaliana (Mouse-ear cress).